A 248-amino-acid polypeptide reads, in one-letter code: MRLIQNMCTITEYPPATNTDCGSSSSAGTASSRVIKIAVVGGSGVGKTALVVRFLTKRFIGDYERNAGNLYSRQVQIDGTNLAIQVQDTPGVQINEQNLESNEQLNKSLRWADAVVIVFSITDCKSFDLISHLHRHARQLHPDNRIPIVIVANKADLLHLKQVEPQHGLQLANMLGCTFYEVSVSENYNDVYNAFQVLCKEISKQQNTGTSERRKNSIIPRPKSPNMQDLKRRFKQALSSKVRTATSV.

The interval 30-248 (ASSRVIKIAV…SSKVRTATSV (219 aa)) is small GTPase-like. GTP-binding positions include 41–48 (GGSGVGKT), 88–99 (DTPGVQINEQNL), and 153–156 (NKAD). The tract at residues 206-228 (QNTGTSERRKNSIIPRPKSPNMQ) is disordered.

The protein belongs to the small GTPase superfamily. Ras family.

The enzyme catalyses GTP + H2O = GDP + phosphate + H(+). This is Ras-like protein family member 11B from Xenopus laevis (African clawed frog).